A 1020-amino-acid chain; its full sequence is Mediator of RNA polymerase II transcription subunit 16 (1020 aa).

This sequence belongs to the Mediator complex subunit 16 family. As to quaternary structure, component of the Mediator complex.

The protein resides in the nucleus. In terms of biological role, component of the Mediator complex, a coactivator involved in the regulated transcription of nearly all RNA polymerase II-dependent genes. Mediator functions as a bridge to convey information from gene-specific regulatory proteins to the basal RNA polymerase II transcription machinery. Mediator is recruited to promoters by direct interactions with regulatory proteins and serves as a scaffold for the assembly of a functional preinitiation complex with RNA polymerase II and the general transcription factors. The protein is Mediator of RNA polymerase II transcription subunit 16 (SIN4) of Scheffersomyces stipitis (strain ATCC 58785 / CBS 6054 / NBRC 10063 / NRRL Y-11545) (Yeast).